Here is a 262-residue protein sequence, read N- to C-terminus: Phycoerythrobilin:ferredoxin oxidoreductase (262 aa).

This sequence belongs to the HY2 family.

It catalyses the reaction (3Z)-phycoerythrobilin + oxidized 2[4Fe-4S]-[ferredoxin] = 15,16-dihydrobiliverdin + reduced 2[4Fe-4S]-[ferredoxin] + 2 H(+). Catalyzes the two-electron reduction of the C2 and C3(1) diene system of 15,16-dihydrobiliverdin. The sequence is that of Phycoerythrobilin:ferredoxin oxidoreductase from Synechococcus sp. (strain RCC307).